A 62-amino-acid polypeptide reads, in one-letter code: LTCVTGKSIGGISTEECAAGQKRCFKKWTKMGPKLYDVSRGCTATCPKADEYGCVKCCNIDK.

3 disulfide bridges follow: cysteine 3-cysteine 24, cysteine 17-cysteine 42, and cysteine 46-cysteine 57.

The protein belongs to the three-finger toxin family. Short-chain subfamily. Aminergic toxin sub-subfamily. Heterodimer of C8S2 chain 1 and chain 2 (AC P01411); disulfide-linked. Expressed by the venom gland.

It is found in the secreted. This protein shows a synergetic toxic effect in that it enhances the toxicity of other toxins. In Dendroaspis angusticeps (Eastern green mamba), this protein is Synergistic-type venom protein C8S2, chain 1.